The sequence spans 91 residues: uncharacterized protein (91 aa).

The first 21 residues, 1–21 (MKIISKMLVGALALAVTNVYA), serve as a signal peptide directing secretion.

This sequence belongs to the BhsA/McbA family.

It is found in the periplasm. This is an uncharacterized protein from Escherichia coli (strain K12).